The chain runs to 231 residues: Elongation factor 1-delta (231 aa).

Positions 75 to 136 (SGVTVEGNAP…AAAAAAKPAK (62 aa)) are disordered. The segment covering 101–117 (ADDDDDDDVDLFGEETE) has biased composition (acidic residues). The span at 118-127 (EEKKAAEERA) shows a compositional bias: basic and acidic residues.

This sequence belongs to the EF-1-beta/EF-1-delta family. EF-1 is composed of 4 subunits: alpha, beta (1B-alpha=beta'), delta (1B-beta), and gamma (1B-gamma).

In terms of biological role, EF-1-beta and EF-1-beta' stimulate the exchange of GDP bound to EF-1-alpha to GTP. In Beta vulgaris (Sugar beet), this protein is Elongation factor 1-delta.